Reading from the N-terminus, the 287-residue chain is Deoxyuridine 5'-triphosphate nucleotidohydrolase (287 aa).

173 to 175 (RSG) contacts substrate. The segment covering 264–275 (SSSKDTSDSQMS) has biased composition (low complexity). The segment at 264–287 (SSSKDTSDSQMSRGDAGLGSSGLM) is disordered.

It belongs to the dUTPase family. It depends on Mg(2+) as a cofactor.

The enzyme catalyses dUTP + H2O = dUMP + diphosphate + H(+). Functionally, involved in nucleotide metabolism: produces dUMP, the immediate precursor of thymidine nucleotides and decreases the intracellular concentration of dUTP to avoid uracil incorporation into viral DNA. In Saimiriine herpesvirus 2 (strain 11) (SaHV-2), this protein is Deoxyuridine 5'-triphosphate nucleotidohydrolase.